Reading from the N-terminus, the 504-residue chain is Probable cytosol aminopeptidase (504 aa).

Mn(2+) contacts are provided by lysine 272 and aspartate 277. Lysine 284 is an active-site residue. Residues aspartate 295, aspartate 354, and glutamate 356 each coordinate Mn(2+). Arginine 358 is a catalytic residue.

The protein belongs to the peptidase M17 family. Mn(2+) serves as cofactor.

Its subcellular location is the cytoplasm. The catalysed reaction is Release of an N-terminal amino acid, Xaa-|-Yaa-, in which Xaa is preferably Leu, but may be other amino acids including Pro although not Arg or Lys, and Yaa may be Pro. Amino acid amides and methyl esters are also readily hydrolyzed, but rates on arylamides are exceedingly low.. It carries out the reaction Release of an N-terminal amino acid, preferentially leucine, but not glutamic or aspartic acids.. Functionally, presumably involved in the processing and regular turnover of intracellular proteins. Catalyzes the removal of unsubstituted N-terminal amino acids from various peptides. The chain is Probable cytosol aminopeptidase from Chlorobaculum tepidum (strain ATCC 49652 / DSM 12025 / NBRC 103806 / TLS) (Chlorobium tepidum).